Consider the following 723-residue polypeptide: LIM domain-binding protein 3 (723 aa).

The PDZ domain occupies 1 to 84 (MSYSVTLTGP…NLSLTLQKSK (84 aa)). Residues Ser44, Ser98, and Asp112 each carry the phosphoserine modification. Disordered stretches follow at residues 89–134 (ISTT…GALE) and 164–193 (SPVA…RQYN). Thr119 is subject to Phosphothreonine. Ser121 and Ser123 each carry phosphoserine. Ser214 is modified (phosphoserine). Residue Arg216 is modified to Omega-N-methylarginine. 3 positions are modified to phosphoserine: Ser220, Ser251, and Asp288. 2 disordered regions span residues 280–423 (GTEY…YSPT) and 436–525 (SPAP…PQVT). Ala291 carries the post-translational modification Omega-N-methylarginine. Positions 309–376 (ATSPLLPASA…AAAASPAPSA (68 aa)) are enriched in low complexity. Ile327 is subject to Phosphoserine. Ser330 bears the Omega-N-methylarginine mark. Residues 436–466 (SPAPTYTPSPAPTYSPSPAPAYTPSPAPNYT) are compositionally biased toward pro residues. A compositionally biased stretch (polar residues) spans 490–509 (DSFSQKFAPGKSTTTVSKQT). Omega-N-methylarginine occurs at positions 512 and 529. LIM zinc-binding domains lie at 545–603 (PLCG…QFFA), 604–663 (PICA…LFST), and 664–723 (KCHG…AINV).

Interacts via its LIM domains with various PKC isoforms. Interacts via its PDZ domain with the ACTN2 C-terminal region. Interacts with MYOZ1, MYOZ2 and MYOZ3. As to expression, expressed primarily in adult heart and skeletal muscle, and detected at lower levels in lung. Isoforms are expressed in a tissue-specific manner. Isoform 1, isoform 3 and isoform 5 are expressed in heart, whereas isoform 2, isoform 4 and isoform 6 are expressed in skeletal muscle.

It is found in the cytoplasm. Its subcellular location is the perinuclear region. It localises to the cell projection. The protein resides in the pseudopodium. The protein localises to the cytoskeleton. It is found in the myofibril. Its subcellular location is the sarcomere. It localises to the z line. In terms of biological role, may function as an adapter in striated muscle to couple protein kinase C-mediated signaling via its LIM domains to the cytoskeleton. This chain is LIM domain-binding protein 3, found in Mus musculus (Mouse).